The chain runs to 533 residues: DEAD-box ATP-dependent RNA helicase CshA (533 aa).

Positions 2-30 (TTFRELGLSDSLLQSVESMGFEEATPIQA) match the Q motif motif. The Helicase ATP-binding domain maps to 33–203 (IPHALQGKDI…ERFMTEPQHI (171 aa)). 46-53 (AQTGTGKT) lines the ATP pocket. Residues 151–154 (DEAD) carry the DEAD box motif. The Helicase C-terminal domain maps to 214–374 (NIQQFYLEVQ…RMDAPTLDEA (161 aa)). The tract at residues 428-533 (TTPIALTSEP…ERKHHSRPQA (106 aa)) is disordered. The segment covering 458 to 512 (DGNRNRSRDGRGGGDGRNRDRNRDGRNRDGNRDRNRDGNRDRNRDGGSRGRRGEG) has biased composition (basic and acidic residues). The span at 524 to 533 (ERKHHSRPQA) shows a compositional bias: basic residues.

The protein belongs to the DEAD box helicase family. CshA subfamily. As to quaternary structure, oligomerizes, may be a member of the RNA degradosome.

The protein resides in the cytoplasm. It catalyses the reaction ATP + H2O = ADP + phosphate + H(+). Its function is as follows. DEAD-box RNA helicase possibly involved in RNA degradation. May work in conjunction with the cold shock proteins to ensure proper initiation of transcription at low and optimal temperatures. Unwinds dsRNA in both 5'- and 3'-directions and shows RNA-dependent ATPase activity. Probably has a somewhat redundant function with cshB, as cshA can partially complement the growth effects of a cshB deletion. Plays a role in adaptation to cold, oxididant and pH stress. This Bacillus cereus (strain ATCC 14579 / DSM 31 / CCUG 7414 / JCM 2152 / NBRC 15305 / NCIMB 9373 / NCTC 2599 / NRRL B-3711) protein is DEAD-box ATP-dependent RNA helicase CshA.